We begin with the raw amino-acid sequence, 443 residues long: Probable glycine dehydrogenase (decarboxylating) subunit 1 (443 aa).

The protein belongs to the GcvP family. N-terminal subunit subfamily. In terms of assembly, the glycine cleavage system is composed of four proteins: P, T, L and H. In this organism, the P 'protein' is a heterodimer of two subunits.

It carries out the reaction N(6)-[(R)-lipoyl]-L-lysyl-[glycine-cleavage complex H protein] + glycine + H(+) = N(6)-[(R)-S(8)-aminomethyldihydrolipoyl]-L-lysyl-[glycine-cleavage complex H protein] + CO2. In terms of biological role, the glycine cleavage system catalyzes the degradation of glycine. The P protein binds the alpha-amino group of glycine through its pyridoxal phosphate cofactor; CO(2) is released and the remaining methylamine moiety is then transferred to the lipoamide cofactor of the H protein. The protein is Probable glycine dehydrogenase (decarboxylating) subunit 1 of Solidesulfovibrio magneticus (strain ATCC 700980 / DSM 13731 / RS-1) (Desulfovibrio magneticus).